We begin with the raw amino-acid sequence, 2339 residues long: Inverse autotransporter adhesin YeeJ (2339 aa).

Positions 1–26 (MGIKLRRLTAGICLITQLAFPMAAAA) are cleaved as a signal peptide. In terms of domain architecture, LysM spans 50-98 (VPYTLGALESAQSVAERFGISVAELRKLNQFRTFARGFDNVRQGDELDV). The interval 125 to 400 (TSQQIGSLLA…SRYDLVDRNN (276 aa)) is inverse autotransporter. Residues 513 to 605 (QKDSSVSLST…GVDAAKAPAV (93 aa)) are invasin 3 domain. Big-1 domains are found at residues 721 to 815 (IATL…VSFV), 822 to 913 (QVDL…VNFI), 920 to 1017 (ALTL…MTFV), 1024 to 1121 (VVVL…VTFV), 1128 to 1221 (QVVL…VHFI), 1229 to 1331 (IIEL…SINV), 1339 to 1432 (HLTL…VTYV), 1439 to 1535 (EITL…VNFI), 1542 to 1639 (QVNL…VTLI), 1646 to 1730 (KLAS…PTEV), 1746 to 1837 (ITSL…LEAI), 1840 to 1934 (KLTL…VKVT), and 1942 to 2034 (VASF…ITLV). Residues 2236 to 2339 (KSWWVNAGEA…FAYATCYKNL (104 aa)) form a C-type lectin domain region.

Belongs to the intimin/invasin family.

It localises to the cell outer membrane. A cryptic inverse autotransporter, it is not expressed in wild-type strain MG1655. Upon overexpression shows increased adherence to polyvinyl chloride (PVC) plates and increased mature biofilm formation. Probably binds peptidoglycan. In Escherichia coli (strain K12), this protein is Inverse autotransporter adhesin YeeJ (yeeJ).